The primary structure comprises 411 residues: Chorismate synthase (411 aa).

Residues Arg40 and Arg46 each coordinate NADP(+). Residues 135-137 (RAS) and 256-257 (QA) contribute to the FMN site. Positions 278-299 (HDGIARGADGRPRRTSDRAGGI) are disordered. The span at 285–294 (ADGRPRRTSD) shows a compositional bias: basic and acidic residues. FMN contacts are provided by residues Ala301, 316-320 (KPIAT), and Arg342.

Belongs to the chorismate synthase family. In terms of assembly, homotetramer. The cofactor is FMNH2.

It carries out the reaction 5-O-(1-carboxyvinyl)-3-phosphoshikimate = chorismate + phosphate. It participates in metabolic intermediate biosynthesis; chorismate biosynthesis; chorismate from D-erythrose 4-phosphate and phosphoenolpyruvate: step 7/7. Functionally, catalyzes the anti-1,4-elimination of the C-3 phosphate and the C-6 proR hydrogen from 5-enolpyruvylshikimate-3-phosphate (EPSP) to yield chorismate, which is the branch point compound that serves as the starting substrate for the three terminal pathways of aromatic amino acid biosynthesis. This reaction introduces a second double bond into the aromatic ring system. In Micrococcus luteus (strain ATCC 4698 / DSM 20030 / JCM 1464 / CCM 169 / CCUG 5858 / IAM 1056 / NBRC 3333 / NCIMB 9278 / NCTC 2665 / VKM Ac-2230) (Micrococcus lysodeikticus), this protein is Chorismate synthase.